We begin with the raw amino-acid sequence, 139 residues long: Phosphoribosyl-AMP cyclohydrolase (139 aa).

D91 serves as a coordination point for Mg(2+). Residue C92 coordinates Zn(2+). 2 residues coordinate Mg(2+): D93 and D95. The Zn(2+) site is built by C110 and C117.

It belongs to the PRA-CH family. In terms of assembly, homodimer. Mg(2+) is required as a cofactor. The cofactor is Zn(2+).

The protein resides in the cytoplasm. The catalysed reaction is 1-(5-phospho-beta-D-ribosyl)-5'-AMP + H2O = 1-(5-phospho-beta-D-ribosyl)-5-[(5-phospho-beta-D-ribosylamino)methylideneamino]imidazole-4-carboxamide. It participates in amino-acid biosynthesis; L-histidine biosynthesis; L-histidine from 5-phospho-alpha-D-ribose 1-diphosphate: step 3/9. In terms of biological role, catalyzes the hydrolysis of the adenine ring of phosphoribosyl-AMP. In Brucella abortus (strain S19), this protein is Phosphoribosyl-AMP cyclohydrolase.